The primary structure comprises 377 residues: Cytochrome c peroxidase, mitochondrial (377 aa).

A mitochondrion-targeting transit peptide spans 1–32 (MSFRAPNLIRSTVGRRAGQTLNLRSQVIRRRF). H138 acts as the Proton acceptor in catalysis. H261 contacts heme b. W277 (tryptophan radical intermediate) is an active-site residue.

Belongs to the peroxidase family. Cytochrome c peroxidase subfamily. As to quaternary structure, forms a one-to-one complex with cytochrome c. Interacts with MID1 (via C-terminus); the interaction may contribute to cellular detoxification of radicals. It depends on heme b as a cofactor.

It localises to the mitochondrion matrix. The protein localises to the mitochondrion intermembrane space. The enzyme catalyses 2 Fe(II)-[cytochrome c] + H2O2 + 2 H(+) = 2 Fe(III)-[cytochrome c] + 2 H2O. Its function is as follows. Destroys radicals which are normally produced within the cells and which are toxic to biological systems. This is Cytochrome c peroxidase, mitochondrial (CCP1) from Cryptococcus neoformans var. grubii serotype A (strain H99 / ATCC 208821 / CBS 10515 / FGSC 9487) (Filobasidiella neoformans var. grubii).